Here is a 347-residue protein sequence, read N- to C-terminus: Anthranilate phosphoribosyltransferase (347 aa).

5-phospho-alpha-D-ribose 1-diphosphate contacts are provided by residues G88, 91–92 (GD), T96, 98–101 (NIST), 116–124 (KHGNRAASS), and S128. Anthranilate is bound at residue G88. S100 provides a ligand contact to Mg(2+). N119 provides a ligand contact to anthranilate. R174 is an anthranilate binding site. D233 and E234 together coordinate Mg(2+).

Belongs to the anthranilate phosphoribosyltransferase family. In terms of assembly, homodimer. It depends on Mg(2+) as a cofactor.

The enzyme catalyses N-(5-phospho-beta-D-ribosyl)anthranilate + diphosphate = 5-phospho-alpha-D-ribose 1-diphosphate + anthranilate. It functions in the pathway amino-acid biosynthesis; L-tryptophan biosynthesis; L-tryptophan from chorismate: step 2/5. Its function is as follows. Catalyzes the transfer of the phosphoribosyl group of 5-phosphorylribose-1-pyrophosphate (PRPP) to anthranilate to yield N-(5'-phosphoribosyl)-anthranilate (PRA). This chain is Anthranilate phosphoribosyltransferase, found in Rhodospirillum rubrum (strain ATCC 11170 / ATH 1.1.1 / DSM 467 / LMG 4362 / NCIMB 8255 / S1).